The following is a 273-amino-acid chain: MDWLILIKAFLLGIVEGLTEFLPISSTGHLILAGDLLDFNDDKAQVFTVAIQLGAILSVCWEYRARLINVARGWGTRRANRFVLNLCVAFLPAAILGLLFIKTIKYYLFHPLPVAIALVTGGVLILWAERREHRIEVENVDDMNWKHALKIGCAQCLALIPGTSRSGATIIGGLLSGLSRKAAAEFSFFLAIPIMFAATFYDVYKHREFLHSDDLGMFVVGSIAAFISALIAIRGFIRYVSHHDFTLFAWYRIGFGLIVLLTAHFGLINWSAG.

The next 7 helical transmembrane spans lie at 4–24 (LILIKAFLLGIVEGLTEFLPI), 43–63 (KAQVFTVAIQLGAILSVCWEY), 82–102 (FVLNLCVAFLPAAILGLLFIK), 108–128 (LFHPLPVAIALVTGGVLILWA), 183–203 (AAEFSFFLAIPIMFAATFYDV), 217–237 (MFVVGSIAAFISALIAIRGFI), and 253–273 (IGFGLIVLLTAHFGLINWSAG).

It belongs to the UppP family.

It localises to the cell inner membrane. The enzyme catalyses di-trans,octa-cis-undecaprenyl diphosphate + H2O = di-trans,octa-cis-undecaprenyl phosphate + phosphate + H(+). Functionally, catalyzes the dephosphorylation of undecaprenyl diphosphate (UPP). Confers resistance to bacitracin. The protein is Undecaprenyl-diphosphatase of Nitrosomonas eutropha (strain DSM 101675 / C91 / Nm57).